Reading from the N-terminus, the 153-residue chain is Transcriptional repressor NrdR (153 aa).

A zinc finger spans residues 3 to 34 (CPFCHNQDTRVIDSRAAEEGTAIRRRRSCPAC). The 91-residue stretch at 46-136 (LMVTKRSGAT…VYRSFESLED (91 aa)) folds into the ATP-cone domain.

The protein belongs to the NrdR family. The cofactor is Zn(2+).

Functionally, negatively regulates transcription of bacterial ribonucleotide reductase nrd genes and operons by binding to NrdR-boxes. In Thermobifida fusca (strain YX), this protein is Transcriptional repressor NrdR.